A 254-amino-acid polypeptide reads, in one-letter code: L-arabinose 1-dehydrogenase (NAD(P)(+)) (254 aa).

Tyr-142 serves as the catalytic Proton acceptor. 2 residues coordinate NAD(+): Tyr-142 and Lys-146.

The protein belongs to the NAD(P)-dependent epimerase/dehydratase family. Homotetramer.

The enzyme catalyses alpha-L-arabinopyanose + NAD(+) = L-arabinono-1,4-lactone + NADH + H(+). It catalyses the reaction alpha-L-arabinopyanose + NADP(+) = L-arabinono-1,4-lactone + NADPH + H(+). Its pathway is carbohydrate degradation; L-arabinose degradation via L-arabinono-1,4-lactone pathway. Its function is as follows. L-AraDH initiates the degradation of L-arabinose. Catalyzes the NAD(P)(+)-dependent conversion of L-arabinose to L-arabino-gamma-lactone. It is highly specific for L-arabinose as substrate and can use both NADP(+) and NAD(+) as electron acceptor, with a slight preference for NADP(+). The sequence is that of L-arabinose 1-dehydrogenase (NAD(P)(+)) from Haloferax volcanii (strain ATCC 29605 / DSM 3757 / JCM 8879 / NBRC 14742 / NCIMB 2012 / VKM B-1768 / DS2) (Halobacterium volcanii).